A 955-amino-acid chain; its full sequence is Structure-specific endonuclease subunit SLX4 (955 aa).

Disordered stretches follow at residues 75–173 (QAEQ…RTTS), 189–231 (PVTT…TVSR), 352–376 (GPSNDSKIPNQASPVKSKAPKKKPR), 539–608 (EMQK…PTKI), 621–648 (PIVASDVDSDNEPPPSNQQAYQMPPPPR), 705–784 (AAGQ…ASPD), and 819–846 (LDSDGEAGLSPSPSLSPEPVFSSPEKDS). Residues 123–137 (RKARKTANGVTKKKR) show a composition bias toward basic residues. A compositionally biased stretch (polar residues) spans 150 to 159 (NEITTPTKNQ). Positions 189-198 (PVTTSTTDLT) are enriched in low complexity. The segment covering 209-225 (TKSRVRKTSSAASRKKK) has biased composition (basic residues). Polar residues predominate over residues 352 to 362 (GPSNDSKIPNQ). A compositionally biased stretch (basic and acidic residues) spans 539–551 (EMQKSPSRSEPKG). Positions 579 to 601 (SANSAEHTLKTQASKSTHFASTT) are enriched in polar residues. Composition is skewed to low complexity over residues 705–720 (AAGQSSAFATTSRTSA) and 727–737 (KTSTAAAAAKS). 2 stretches are compositionally biased toward basic residues: residues 738–748 (PTKRPVGRPRK) and 767–776 (KRPRGRPKKN). A compositionally biased stretch (low complexity) spans 828-841 (SPSPSLSPEPVFSS).

Belongs to the SLX4 family. Forms a heterodimer with SLX1. In terms of processing, phosphorylated in response to DNA damage.

The protein localises to the nucleus. In terms of biological role, regulatory subunit of the SLX1-SLX4 structure-specific endonuclease that resolves DNA secondary structures generated during DNA repair and recombination. Has endonuclease activity towards branched DNA substrates, introducing single-strand cuts in duplex DNA close to junctions with ss-DNA. In Pyricularia oryzae (strain 70-15 / ATCC MYA-4617 / FGSC 8958) (Rice blast fungus), this protein is Structure-specific endonuclease subunit SLX4.